Here is a 798-residue protein sequence, read N- to C-terminus: ATP-dependent RecD2 DNA helicase (798 aa).

An ATP-binding site is contributed by 370 to 374 (GTGKT).

Belongs to the RecD family. RecD2 subfamily. Interacts with SSB (sbbA).

It is found in the cytoplasm. The protein resides in the nucleoid. The catalysed reaction is Couples ATP hydrolysis with the unwinding of duplex DNA at the replication fork by translocating in the 5'-3' direction. This creates two antiparallel DNA single strands (ssDNA). The leading ssDNA polymer is the template for DNA polymerase III holoenzyme which synthesizes a continuous strand.. It catalyses the reaction ATP + H2O = ADP + phosphate + H(+). Its function is as follows. In vivo may favor replication restart by preventing RecA from binding to blocked replication forks, avoiding unnecessary recombination during replication restart. Acts as a negative modulator of the RecA-ssDNA filament, may dissasemble RecA threads, can act as both a positive and negative regulator of strand exchange. Probably stabilizes or aids normal replication fork progression, is important for survival after treatment with DNA-damaging agents that can result in replication fork stress. Overcomes the inhibition of replication restart by RecA/RecO, probably by displacing RecA. Increasing levels inhibit PriA-dependent DNA replication initiation (but have little effect on ongoing replication) in vitro; may act by disturbing SsbA assembly. Probably has a role in recombinational DNA repair. Does not seem to contribute to mismatch repair. Has 5'-3' helicase activity that is probably ATP-dependent. This is ATP-dependent RecD2 DNA helicase from Bacillus subtilis (strain 168).